The chain runs to 478 residues: MSSYSELSNLPIREIPGDYGFPIISAIKDRYDYFYNQGEDAWFHNKAEKYKSTVVKINMAPGPFTSNDYKLVAFLDANSFVCMFDNSLIDKTDTLGGTFKPGKEYYGGYRPVAFIDTKDPNHAALKGYILSSFAKRHNLFIPLFRNTLSDHLFNNLEKQVTEQGKADFNALLPTMTFDFIFRLLCDQKNPSDTVLGAQGPEHLRKWLFPQLIPSLSAKKLPNIIEDMLFHNFLIPFGFIKSDYNKLVDAFSKSAVSMLDEAEKLGIKREEAVQNILFLVGINMFAGLNAFFPHLFRFVGEAGASLHTQLAKEIRSVIKEEGGAITLSAINKMSLVKSVVYETLRLRPPVPLQYGKAKKEFMVQSHDASYKINKGQFVVGYQPMASRDPKIFANPDEFVPDRFMNDGEKMLKHVLWSNGRETESPAPDNKQCPGKDLVHLLGRLILVEFFIRYDTFTLEITPLFRAPNVAFNTLTKASK.

Cys431 contributes to the heme binding site.

The protein belongs to the cytochrome P450 family. 9-divinyl ether synthase subfamily. As to expression, expressed in roots. Detected in stems, but not in flower buds, petioles, cotyledons or leaves.

It carries out the reaction (9S)-hydroperoxy-(10E,12Z)-octadecadienoate = colneleate + H2O. The catalysed reaction is (9S)-hydroperoxy-(10E,12Z,15Z)-octadecatrienoate = colnelenate + H2O. Its function is as follows. Involved in the biosynthesis of the anti-fungal toxins colneleate and colnelenate. Can use (9S)-hydroperoxy-(10E,12Z)-octadecadienoate (9-HPOD) and (9S)-hydroperoxy-(10E,12Z,15Z)-octadecatrienoate (9-HPOT) as substrates, but has a very low activity with the corresponding 13-hydroperoxides (13-HPOD and 13-POT). The sequence is that of Divinyl ether synthase CYP74D1 from Solanum lycopersicum (Tomato).